A 231-amino-acid chain; its full sequence is Phosphatidylserine decarboxylase proenzyme (231 aa).

Catalysis depends on S188, which acts as the Schiff-base intermediate with substrate; via pyruvic acid. S188 is modified (pyruvic acid (Ser); by autocatalysis).

This sequence belongs to the phosphatidylserine decarboxylase family. PSD-A subfamily. In terms of assembly, heterodimer of a large membrane-associated beta subunit and a small pyruvoyl-containing alpha subunit. Pyruvate is required as a cofactor. Post-translationally, is synthesized initially as an inactive proenzyme. Formation of the active enzyme involves a self-maturation process in which the active site pyruvoyl group is generated from an internal serine residue via an autocatalytic post-translational modification. Two non-identical subunits are generated from the proenzyme in this reaction, and the pyruvate is formed at the N-terminus of the alpha chain, which is derived from the carboxyl end of the proenzyme. The post-translation cleavage follows an unusual pathway, termed non-hydrolytic serinolysis, in which the side chain hydroxyl group of the serine supplies its oxygen atom to form the C-terminus of the beta chain, while the remainder of the serine residue undergoes an oxidative deamination to produce ammonia and the pyruvoyl prosthetic group on the alpha chain.

It localises to the cell membrane. It carries out the reaction a 1,2-diacyl-sn-glycero-3-phospho-L-serine + H(+) = a 1,2-diacyl-sn-glycero-3-phosphoethanolamine + CO2. The protein operates within phospholipid metabolism; phosphatidylethanolamine biosynthesis; phosphatidylethanolamine from CDP-diacylglycerol: step 2/2. Functionally, catalyzes the formation of phosphatidylethanolamine (PtdEtn) from phosphatidylserine (PtdSer). This is Phosphatidylserine decarboxylase proenzyme from Rickettsia felis (strain ATCC VR-1525 / URRWXCal2) (Rickettsia azadi).